The primary structure comprises 341 residues: tRNA N6-adenosine threonylcarbamoyltransferase (341 aa).

Residues H114 and H118 each contribute to the Fe cation site. Residues 136–140 (LVSGG), D170, G183, D187, and N275 each bind substrate. Residue D303 coordinates Fe cation.

It belongs to the KAE1 / TsaD family. The cofactor is Fe(2+).

The protein resides in the cytoplasm. The catalysed reaction is L-threonylcarbamoyladenylate + adenosine(37) in tRNA = N(6)-L-threonylcarbamoyladenosine(37) in tRNA + AMP + H(+). Required for the formation of a threonylcarbamoyl group on adenosine at position 37 (t(6)A37) in tRNAs that read codons beginning with adenine. Is involved in the transfer of the threonylcarbamoyl moiety of threonylcarbamoyl-AMP (TC-AMP) to the N6 group of A37, together with TsaE and TsaB. TsaD likely plays a direct catalytic role in this reaction. In Mycobacterium avium (strain 104), this protein is tRNA N6-adenosine threonylcarbamoyltransferase.